The following is a 76-amino-acid chain: MLSKQKMARINELAKKAKSSGLTKEEALEQQQLRREYIQVFRKAMEDMLHSVTVIDPNGNDVTPKKLKESQKSRLH.

Residues 54–76 (VIDPNGNDVTPKKLKESQKSRLH) are disordered. A compositionally biased stretch (basic and acidic residues) spans 63 to 76 (TPKKLKESQKSRLH).

This sequence belongs to the UPF0291 family.

Its subcellular location is the cytoplasm. The chain is UPF0291 protein GWCH70_1239 from Geobacillus sp. (strain WCH70).